The chain runs to 477 residues: Pentatricopeptide repeat-containing protein At4g14170 (477 aa).

PPR repeat units follow at residues 65 to 96, 97 to 131, 133 to 167, 168 to 198, 199 to 233, 234 to 264, 269 to 299, 300 to 334, 335 to 369, and 370 to 400; these read NVVL…MPYR, NIFS…SCVR, DDFT…GFSS, SLFV…MPVR, DSVL…GFAL, DSVV…CIRR, GLNL…MSRR, DVIS…GIEP, NAVT…NIVP, and ELKH…MPVK. The type E motif; degenerate stretch occupies residues 405 to 477; that stretch reads VMGAVLSGCK…ISKVPGCSSI (73 aa).

The protein belongs to the PPR family. PCMP-E subfamily.

The sequence is that of Pentatricopeptide repeat-containing protein At4g14170 (PCMP-E17) from Arabidopsis thaliana (Mouse-ear cress).